Here is a 292-residue protein sequence, read N- to C-terminus: Acetylglutamate kinase (292 aa).

Residues 64 to 65 (GG), Arg-86, and Asn-190 contribute to the substrate site.

The protein belongs to the acetylglutamate kinase family. ArgB subfamily.

It localises to the cytoplasm. The enzyme catalyses N-acetyl-L-glutamate + ATP = N-acetyl-L-glutamyl 5-phosphate + ADP. It functions in the pathway amino-acid biosynthesis; L-arginine biosynthesis; N(2)-acetyl-L-ornithine from L-glutamate: step 2/4. Its function is as follows. Catalyzes the ATP-dependent phosphorylation of N-acetyl-L-glutamate. This chain is Acetylglutamate kinase, found in Geobacter sp. (strain M21).